Reading from the N-terminus, the 378-residue chain is Lipid-A-disaccharide synthase (378 aa).

This sequence belongs to the LpxB family.

The enzyme catalyses a lipid X + a UDP-2-N,3-O-bis[(3R)-3-hydroxyacyl]-alpha-D-glucosamine = a lipid A disaccharide + UDP + H(+). It functions in the pathway bacterial outer membrane biogenesis; LPS lipid A biosynthesis. In terms of biological role, condensation of UDP-2,3-diacylglucosamine and 2,3-diacylglucosamine-1-phosphate to form lipid A disaccharide, a precursor of lipid A, a phosphorylated glycolipid that anchors the lipopolysaccharide to the outer membrane of the cell. This is Lipid-A-disaccharide synthase from Pseudomonas paraeruginosa (strain DSM 24068 / PA7) (Pseudomonas aeruginosa (strain PA7)).